A 260-amino-acid polypeptide reads, in one-letter code: MSQRTRLSVNVNKIAVLRNSRGDGAPDVIRAASACIDAGAHGITVHPRPDARHIRHDDVIGLSALTRARGVEFNIEGNPFAEPRAGYCGLLALCRETRPHQVTLVPDGDQQITSDHGFDFAREGPGLRPLIDEIKQWGCRVSLFVDVNVTGLADAAIWGVDRIELYTGPYAEMHHAGCSDAVLREFATTARLAQDVGLGVNAGHDLSQTNLGVFLGAVPDVLEVSIGHALISEALYEGLVPTVRRYLDILDSVNPAVSMR.

3-amino-2-oxopropyl phosphate is bound by residues N10 and R21. H46 functions as the Proton acceptor in the catalytic mechanism. R48 and H53 together coordinate 1-deoxy-D-xylulose 5-phosphate. The Proton acceptor role is filled by E76. T113 lines the 1-deoxy-D-xylulose 5-phosphate pocket. H204 acts as the Proton donor in catalysis. 3-amino-2-oxopropyl phosphate-binding positions include D205 and 227–228; that span reads GH.

The protein belongs to the PNP synthase family. As to quaternary structure, homooctamer; tetramer of dimers.

The protein localises to the cytoplasm. The enzyme catalyses 3-amino-2-oxopropyl phosphate + 1-deoxy-D-xylulose 5-phosphate = pyridoxine 5'-phosphate + phosphate + 2 H2O + H(+). The protein operates within cofactor biosynthesis; pyridoxine 5'-phosphate biosynthesis; pyridoxine 5'-phosphate from D-erythrose 4-phosphate: step 5/5. In terms of biological role, catalyzes the complicated ring closure reaction between the two acyclic compounds 1-deoxy-D-xylulose-5-phosphate (DXP) and 3-amino-2-oxopropyl phosphate (1-amino-acetone-3-phosphate or AAP) to form pyridoxine 5'-phosphate (PNP) and inorganic phosphate. This is Pyridoxine 5'-phosphate synthase from Xylella fastidiosa (strain 9a5c).